A 495-amino-acid chain; its full sequence is Dipeptide and tripeptide permease A (495 aa).

Topologically, residues 1–20 (MTTSALNPLRQPKPFYLIFS) are cytoplasmic. The helical transmembrane segment at 21 to 41 (IEFWERFGFYGLQGILAVYLV) threads the bilayer. Topologically, residues 42 to 51 (KALGLREADS) are periplasmic. Residues 52-72 (FTLFSSFIALVYGLIAVGGWL) form a helical membrane-spanning segment. Residues 73-81 (GDKVLGTKR) are Cytoplasmic-facing. Helical transmembrane passes span 82–102 (TILL…ASSE) and 103–123 (HISL…LFKA). At 124–145 (NPSSLLSKCYEENDPRLDGAFT) the chain is on the periplasmic side. The chain crosses the membrane as a helical span at residues 146-166 (MYYMAINIGSLLSMLATPWLA). Residues 167-171 (DQFGY) are Cytoplasmic-facing. The helical transmembrane segment at 172-192 (AHAFALSVVGMLITVANFILM) threads the bilayer. Over 193-209 (QGWVKNYGSDADFRTPR) the chain is Periplasmic. A helical membrane pass occupies residues 210-230 (LSTWLAVLAGVVAACAAAALL). Residues 231–232 (LK) are Cytoplasmic-facing. The helical transmembrane segment at 233 to 253 (HEIIANVVLAVLSIGVVGLYV) threads the bilayer. The Periplasmic segment spans residues 254-266 (KETLLLKGAERKK). A helical membrane pass occupies residues 267–287 (MIVAAILMLQATVFFVLYNQM). The Cytoplasmic portion of the chain corresponds to 288 to 312 (PLSLNFFAIHNTEHMLFGIPVQPEQ). Residues 313 to 333 (FQSLNPFWIMLASPLLALCYN) form a helical membrane-spanning segment. Residues 334-344 (KLGNRLPMPHK) are Periplasmic-facing. A helical membrane pass occupies residues 345-365 (FAIGMVLCAGAFLVLPLGAKY). At 366-375 (ANAQGLVSSN) the chain is on the cytoplasmic side. The chain crosses the membrane as a helical span at residues 376-396 (WMVLSYLLQSVGELLISGLGL). The Periplasmic segment spans residues 397–409 (AMVAQLVPQRLMG). A helical membrane pass occupies residues 410–430 (FIMGAWFLTSAASSVIAGWVA). Residues 431–451 (GLTAAPDNVTNPLATLEIYSR) lie on the Cytoplasmic side of the membrane. A helical membrane pass occupies residues 452–472 (VFTQIGVVTGVIAVVTIIIAP). The Periplasmic portion of the chain corresponds to 473-495 (WLHRMTLDEKPAHPEHEMALDAR).

Belongs to the major facilitator superfamily. Proton-dependent oligopeptide transporter (POT/PTR) (TC 2.A.17) family. DtpA subfamily.

Its subcellular location is the cell inner membrane. Proton-dependent permease that transports di- and tripeptides. This Chromobacterium violaceum (strain ATCC 12472 / DSM 30191 / JCM 1249 / CCUG 213 / NBRC 12614 / NCIMB 9131 / NCTC 9757 / MK) protein is Dipeptide and tripeptide permease A.